Here is a 488-residue protein sequence, read N- to C-terminus: ATP synthase subunit beta (488 aa).

An ATP-binding site is contributed by 164 to 171 (GGAGMGKT).

Belongs to the ATPase alpha/beta chains family. F-type ATPases have 2 components, CF(1) - the catalytic core - and CF(0) - the membrane proton channel. CF(1) has five subunits: alpha(3), beta(3), gamma(1), delta(1), epsilon(1). CF(0) has four main subunits: a(1), b(1), b'(1) and c(9-12).

Its subcellular location is the cellular thylakoid membrane. It catalyses the reaction ATP + H2O + 4 H(+)(in) = ADP + phosphate + 5 H(+)(out). Its function is as follows. Produces ATP from ADP in the presence of a proton gradient across the membrane. The catalytic sites are hosted primarily by the beta subunits. In Synechococcus sp. (strain RCC307), this protein is ATP synthase subunit beta.